Here is a 95-residue protein sequence, read N- to C-terminus: DNA-directed RNA polymerase subunit Rpo11 (95 aa).

It belongs to the archaeal Rpo11/eukaryotic RPB11/RPC19 RNA polymerase subunit family. As to quaternary structure, part of the RNA polymerase complex.

It localises to the cytoplasm. The enzyme catalyses RNA(n) + a ribonucleoside 5'-triphosphate = RNA(n+1) + diphosphate. DNA-dependent RNA polymerase (RNAP) catalyzes the transcription of DNA into RNA using the four ribonucleoside triphosphates as substrates. This chain is DNA-directed RNA polymerase subunit Rpo11, found in Thermococcus sibiricus (strain DSM 12597 / MM 739).